We begin with the raw amino-acid sequence, 255 residues long: Small ribosomal subunit protein uS2 (255 aa).

The tract at residues D233 to K255 is disordered.

This sequence belongs to the universal ribosomal protein uS2 family.

In Lactococcus lactis subsp. lactis (strain IL1403) (Streptococcus lactis), this protein is Small ribosomal subunit protein uS2 (rpsB).